Here is a 346-residue protein sequence, read N- to C-terminus: Flap endonuclease 1 (346 aa).

Residues Met-1–Arg-102 form an N-domain region. Mg(2+)-binding residues include Asp-31, Asp-84, Glu-156, Glu-158, Asp-177, Asp-179, and Asp-239. An I-domain region spans residues Asp-120 to Gly-261.

The protein belongs to the XPG/RAD2 endonuclease family. FEN1 subfamily. In terms of assembly, interacts with PCNA. PCNA stimulates the nuclease activity without altering cleavage specificity. It depends on Mg(2+) as a cofactor.

In terms of biological role, structure-specific nuclease with 5'-flap endonuclease and 5'-3' exonuclease activities involved in DNA replication and repair. During DNA replication, cleaves the 5'-overhanging flap structure that is generated by displacement synthesis when DNA polymerase encounters the 5'-end of a downstream Okazaki fragment. Binds the unpaired 3'-DNA end and kinks the DNA to facilitate 5' cleavage specificity. Cleaves one nucleotide into the double-stranded DNA from the junction in flap DNA, leaving a nick for ligation. Also involved in the base excision repair (BER) pathway. Acts as a genome stabilization factor that prevents flaps from equilibrating into structures that lead to duplications and deletions. Also possesses 5'-3' exonuclease activity on nicked or gapped double-stranded DNA. The chain is Flap endonuclease 1 from Pyrobaculum aerophilum (strain ATCC 51768 / DSM 7523 / JCM 9630 / CIP 104966 / NBRC 100827 / IM2).